A 235-amino-acid chain; its full sequence is Peptidase E (235 aa).

Catalysis depends on charge relay system residues Ser-122, Asp-137, and His-159.

This sequence belongs to the peptidase S51 family.

It localises to the cytoplasm. It catalyses the reaction Dipeptidase E catalyzes the hydrolysis of dipeptides Asp-|-Xaa. It does not act on peptides with N-terminal Glu, Asn or Gln, nor does it cleave isoaspartyl peptides.. In terms of biological role, hydrolyzes dipeptides containing N-terminal aspartate residues. May play a role in allowing the cell to use peptide aspartate to spare carbon otherwise required for the synthesis of the aspartate family of amino acids. In Shewanella amazonensis (strain ATCC BAA-1098 / SB2B), this protein is Peptidase E.